The primary structure comprises 609 residues: MSQAQIDEIFALLDSAAKVLIDQGVLPADWQNNSQITRSKSPEHGDYASNIALTAAKAAKSNPRALAEQLTAALPANDSIAKLEIAGPGFINIFLNTDAKFAVLDAIFAKNQKYGLTDEFANKKIQVEFVSANPTSSLHVGHGRGAAFGMSVANLLEAVGYEVTREYYVNDAGRQMDILATSTYLRYLQLNGEQIHFPVGGYQGDYVTDIAQTIKTQQNDAYVHSYADISANAPEDEVSEVNDAGEKEVVSGDKNAHIDVIIANSKQALGDNYAVFLNAALSEILGDIKDDLNEFGVRFERWFSEKSIADEIEPVLAELDSKGHLYEKDGNIWFRSTDFGDEKDRVVRRANGLTTYFASDIAYHKNKFERGFDTVINVWGADHHGYIARVRAALTALGIDEKRLEVILVQFVALWRGEEKIQMSSRSGKFVTLRELREEVGNDAARFYYVARKPEVHIDFDLELAKSQSKDNAVYYIQYAHARVCSVLEKLAAKGFDVDDAQGSAQQHLLTADAESELIKLLAAYPATLKRAATGYDPHVLTNYLKDLASLFHAWYNDNRILPVSIIADETPSQEELDMMQARLRLSKAVRQVLANGLSLLGLSAPTSM.

Residues 132 to 142 (ANPTSSLHVGH) carry the 'HIGH' region motif.

It belongs to the class-I aminoacyl-tRNA synthetase family. As to quaternary structure, monomer.

Its subcellular location is the cytoplasm. The catalysed reaction is tRNA(Arg) + L-arginine + ATP = L-arginyl-tRNA(Arg) + AMP + diphosphate. This Psychrobacter sp. (strain PRwf-1) protein is Arginine--tRNA ligase.